A 201-amino-acid chain; its full sequence is Ribonuclease HII (201 aa).

The RNase H type-2 domain occupies 14–201 (NLIAGVDEVG…KPVKRILGIE (188 aa)). A divalent metal cation is bound by residues Asp-20, Glu-21, and Asp-112.

This sequence belongs to the RNase HII family. It depends on Mn(2+) as a cofactor. Requires Mg(2+) as cofactor.

It localises to the cytoplasm. It carries out the reaction Endonucleolytic cleavage to 5'-phosphomonoester.. Endonuclease that specifically degrades the RNA of RNA-DNA hybrids. In Photobacterium profundum (strain SS9), this protein is Ribonuclease HII.